The sequence spans 745 residues: Aminopeptidase NAALADL1 (745 aa).

The Cytoplasmic segment spans residues 1 to 6 (MHWAKI). Residues 7-28 (LGVGIGAAALLGLGIILGHFAI) form a helical; Signal-anchor for type II membrane protein membrane-spanning segment. Topologically, residues 29 to 745 (PKATEPLASS…AATLQPVTDL (717 aa)) are extracellular. Residues Asn128, Asn141, and Asn235 are each glycosylated (N-linked (GlcNAc...) asparagine). Thr263 and Leu266 together coordinate Ca(2+). Residues Asn279, Asn304, and Asn350 are each glycosylated (N-linked (GlcNAc...) asparagine). Cysteines 301 and 318 form a disulfide. The Zn(2+) site is built by His373 and Asp383. The Proton donor/acceptor role is filled by Glu421. A Zn(2+)-binding site is contributed by Glu422. The Ca(2+) site is built by Glu430 and Glu433. Position 450 (Asp450) interacts with Zn(2+). Asn456 and Asn497 each carry an N-linked (GlcNAc...) asparagine glycan. A Zn(2+)-binding site is contributed by His550. N-linked (GlcNAc...) asparagine glycosylation is found at Asn593 and Asn620.

It belongs to the peptidase M28 family. M28B subfamily. Homodimer. Requires Zn(2+) as cofactor. In terms of processing, N-glycosylated. In terms of tissue distribution, detected on apical villi on the brush border membrane of ileum enterocytes (at protein level). Mainly expressed in the distal small intestine.

It localises to the apical cell membrane. Aminopeptidase with broad substrate specificity. Has lower activity with substrates that have Asp or Glu in the P2' position, or Pro in the P3' position. Lacks activity with substrates that have both Pro in the P3' position and Asp or Glu in the P2' position. Lacks carboxypeptidase activity. Lacks dipeptidyl-peptidase IV type activity. This chain is Aminopeptidase NAALADL1 (Naaladl1), found in Rattus norvegicus (Rat).